The sequence spans 426 residues: Adenylosuccinate synthetase (426 aa).

GTP contacts are provided by residues 11 to 17 and 39 to 41; these read GDEGKGK and GHT. Catalysis depends on D12, which acts as the Proton acceptor. Residues D12 and G39 each contribute to the Mg(2+) site. Residues 12 to 15, 37 to 40, T130, R144, N226, T241, and R305 contribute to the IMP site; these read DEGK and NAGH. Catalysis depends on H40, which acts as the Proton donor. Substrate is bound at residue 301–307; it reads VTTGRKR. GTP is bound by residues R307, 333–335, and 415–417; these read KLD and GTG.

It belongs to the adenylosuccinate synthetase family. As to quaternary structure, homodimer. Mg(2+) serves as cofactor.

Its subcellular location is the cytoplasm. It catalyses the reaction IMP + L-aspartate + GTP = N(6)-(1,2-dicarboxyethyl)-AMP + GDP + phosphate + 2 H(+). It participates in purine metabolism; AMP biosynthesis via de novo pathway; AMP from IMP: step 1/2. In terms of biological role, plays an important role in the de novo pathway and in the salvage pathway of purine nucleotide biosynthesis. Catalyzes the first committed step in the biosynthesis of AMP from IMP. This Meyerozyma guilliermondii (strain ATCC 6260 / CBS 566 / DSM 6381 / JCM 1539 / NBRC 10279 / NRRL Y-324) (Yeast) protein is Adenylosuccinate synthetase.